Reading from the N-terminus, the 146-residue chain is Wheatwin-1 (146 aa).

The N-terminal stretch at 1 to 21 (MAARPMLVVALLCAAAAAATA) is a signal peptide. The residue at position 22 (Gln22) is a Pyrrolidone carboxylic acid. The Barwin domain maps to 22-146 (QQATNVRATY…VNYQFVDCRD (125 aa)). 3 disulfide bridges follow: Cys52–Cys84, Cys73–Cys107, and Cys87–Cys144.

Monomer.

With respect to regulation, inhibited by 5'-ADP. Shows antifungal activity towards B.cinerea and towards the wheat-specific pathogenic fungi F.culmorum and F.graminearum (groups 1 and 2). Has ribonuclease activity. The protein is Wheatwin-1 (PR4A) of Triticum aestivum (Wheat).